Reading from the N-terminus, the 332-residue chain is Cell growth regulator with RING finger domain protein 1 (332 aa).

An RING-type zinc finger spans residues 274 to 309 (CVVCQNGTVNWVLLPCRHTCLCDGCVKYFQQCPMCR).

In terms of tissue distribution, ubiquitously expressed with high expression in testis and the cerebellum.

Its subcellular location is the nucleus. The protein resides in the endoplasmic reticulum. In terms of biological role, able to inhibit growth in several cell lines. This Homo sapiens (Human) protein is Cell growth regulator with RING finger domain protein 1 (CGRRF1).